Reading from the N-terminus, the 102-residue chain is MVQVVSQENFADSIASGLVLIDFFAEWCGPCKMLTPVLEALAAELPHVTILKVDIDSSPRPAEQYSVSSIPTLILFKDGKEVERSVGLKDKDSLIKLISKHQ.

The 102-residue stretch at 1–102 (MVQVVSQENF…SLIKLISKHQ (102 aa)) folds into the Thioredoxin domain. Residues Cys28 and Cys31 are joined by a disulfide bond.

It belongs to the thioredoxin family.

In terms of biological role, participates in various redox reactions through the reversible oxidation of its active center dithiol to a disulfide and catalyzes dithiol-disulfide exchange reactions. The protein is Thioredoxin (trxA) of Chlamydia trachomatis serovar D (strain ATCC VR-885 / DSM 19411 / UW-3/Cx).